Consider the following 209-residue polypeptide: Uracil phosphoribosyltransferase (209 aa).

5-phospho-alpha-D-ribose 1-diphosphate-binding positions include Arg79, Arg104, and 131 to 139 (DPMLATGNS). Uracil contacts are provided by residues Ile194 and 199 to 201 (GDA). Asp200 is a binding site for 5-phospho-alpha-D-ribose 1-diphosphate.

It belongs to the UPRTase family. Mg(2+) serves as cofactor.

The catalysed reaction is UMP + diphosphate = 5-phospho-alpha-D-ribose 1-diphosphate + uracil. It functions in the pathway pyrimidine metabolism; UMP biosynthesis via salvage pathway; UMP from uracil: step 1/1. Allosterically activated by GTP. Functionally, catalyzes the conversion of uracil and 5-phospho-alpha-D-ribose 1-diphosphate (PRPP) to UMP and diphosphate. The polypeptide is Uracil phosphoribosyltransferase (Sinorhizobium medicae (strain WSM419) (Ensifer medicae)).